Reading from the N-terminus, the 347-residue chain is Glycerol-1-phosphate dehydrogenase [NAD(P)+] (347 aa).

NAD(+) contacts are provided by residues 90–94 (GRPVD) and 112–115 (TAIS). Asp117 is a substrate binding site. Ser121 is an NAD(+) binding site. Position 165 (Asp165) interacts with substrate. Positions 165 and 245 each coordinate Zn(2+). His249 lines the substrate pocket. His262 serves as a coordination point for Zn(2+).

This sequence belongs to the glycerol-1-phosphate dehydrogenase family. Homodimer. The cofactor is Zn(2+).

It is found in the cytoplasm. It catalyses the reaction sn-glycerol 1-phosphate + NAD(+) = dihydroxyacetone phosphate + NADH + H(+). The enzyme catalyses sn-glycerol 1-phosphate + NADP(+) = dihydroxyacetone phosphate + NADPH + H(+). Its pathway is membrane lipid metabolism; glycerophospholipid metabolism. Functionally, catalyzes the NAD(P)H-dependent reduction of dihydroxyacetonephosphate (DHAP or glycerone phosphate) to glycerol 1-phosphate (G1P). The G1P thus generated is used as the glycerophosphate backbone of phospholipids in the cellular membranes of Archaea. The protein is Glycerol-1-phosphate dehydrogenase [NAD(P)+] of Thermofilum pendens (strain DSM 2475 / Hrk 5).